Consider the following 352-residue polypeptide: Ion-translocating oxidoreductase complex subunit D (352 aa).

4 consecutive transmembrane segments (helical) span residues 20–40 (IMLL…WFFG), 42–62 (GTLV…ALVL), 89–109 (IPPL…VIIA), and 123–143 (PAMI…TSWL). T187 bears the FMN phosphoryl threonine mark. Helical transmembrane passes span 214 to 234 (ILAG…GLWL), 242 to 262 (WHIP…GWLF), 267 to 287 (LAAP…FFIL), 301 to 321 (LIFG…GGYP), and 322 to 342 (DGVA…DYYT).

Belongs to the NqrB/RnfD family. In terms of assembly, the complex is composed of six subunits: RsxA, RsxB, RsxC, RsxD, RsxE and RsxG. Requires FMN as cofactor.

The protein localises to the cell inner membrane. In terms of biological role, part of a membrane-bound complex that couples electron transfer with translocation of ions across the membrane. Required to maintain the reduced state of SoxR. The polypeptide is Ion-translocating oxidoreductase complex subunit D (Shigella sonnei (strain Ss046)).